The primary structure comprises 175 residues: MFLAAEGSHNPILPIWQELVVGTIAFALLVFVLLKFVMPRMETMYQARVDAIEGGLKRAEAAQAEANQLLEQYRAQLAEVRTEAARIRDDARADAEGIRQDILAKAREESDRIIAAGKEQLVAERTTIVRELRTEVGTLAVDLAGKIVGESLADEARRAGTVDRFLNGLESAGAR.

The helical transmembrane segment at 19 to 39 (LVVGTIAFALLVFVLLKFVMP) threads the bilayer.

Belongs to the ATPase B chain family. In terms of assembly, F-type ATPases have 2 components, F(1) - the catalytic core - and F(0) - the membrane proton channel. F(1) has five subunits: alpha(3), beta(3), gamma(1), delta(1), epsilon(1). F(0) has three main subunits: a(1), b(2) and c(10-14). The alpha and beta chains form an alternating ring which encloses part of the gamma chain. F(1) is attached to F(0) by a central stalk formed by the gamma and epsilon chains, while a peripheral stalk is formed by the delta and b chains.

It is found in the cell membrane. F(1)F(0) ATP synthase produces ATP from ADP in the presence of a proton or sodium gradient. F-type ATPases consist of two structural domains, F(1) containing the extramembraneous catalytic core and F(0) containing the membrane proton channel, linked together by a central stalk and a peripheral stalk. During catalysis, ATP synthesis in the catalytic domain of F(1) is coupled via a rotary mechanism of the central stalk subunits to proton translocation. Functionally, component of the F(0) channel, it forms part of the peripheral stalk, linking F(1) to F(0). This Salinispora tropica (strain ATCC BAA-916 / DSM 44818 / JCM 13857 / NBRC 105044 / CNB-440) protein is ATP synthase subunit b.